Here is a 164-residue protein sequence, read N- to C-terminus: Endoribonuclease YbeY (164 aa).

Zn(2+) is bound by residues H117, H121, and H127.

Belongs to the endoribonuclease YbeY family. Zn(2+) serves as cofactor.

The protein localises to the cytoplasm. Single strand-specific metallo-endoribonuclease involved in late-stage 70S ribosome quality control and in maturation of the 3' terminus of the 16S rRNA. The sequence is that of Endoribonuclease YbeY from Mycoplasma capricolum subsp. capricolum (strain California kid / ATCC 27343 / NCTC 10154).